The primary structure comprises 587 residues: Ankyrin repeat and SOCS box protein 14 (587 aa).

11 ANK repeats span residues 81–110 (NGWL…PSTW), 116–145 (NGET…NPNA), 149–178 (EGNS…DVNL), 182–211 (NERT…YPDA), 215–244 (YGFT…DVHS), 248–277 (DSSS…DANI), 281–310 (SGHL…IAAI), 313–342 (SGIS…DVNF), 355–384 (QRKS…LPNQ), 385–414 (DPVN…NVNY), and 416–449 (CRVN…DTER). In terms of domain architecture, SOCS box spans 521 to 576 (WPEIHFILANPRSLQHLCRLKIRKCMGRLRLRCPVFMSFLPLPNLLKAYVLYKEYD).

Belongs to the ankyrin SOCS box (ASB) family. As to quaternary structure, interacts with MAPRE2; this interaction promotes MAPRE2 degradation.

Its pathway is protein modification; protein ubiquitination. In terms of biological role, may be a substrate-recognition component of a SCF-like ECS (Elongin-Cullin-SOCS-box protein) E3 ubiquitin-protein ligase complex which mediates the ubiquitination and subsequent proteasomal degradation of target proteins. Plays a role in the inhibition of cardiomyocyte nuclear proliferation by mediating the ubiquitination and degradation of MAPRE2. This chain is Ankyrin repeat and SOCS box protein 14 (Asb14), found in Mus musculus (Mouse).